Here is a 178-residue protein sequence, read N- to C-terminus: ATP synthase subunit delta (178 aa).

Belongs to the ATPase delta chain family. In terms of assembly, F-type ATPases have 2 components, F(1) - the catalytic core - and F(0) - the membrane proton channel. F(1) has five subunits: alpha(3), beta(3), gamma(1), delta(1), epsilon(1). F(0) has three main subunits: a(1), b(2) and c(10-14). The alpha and beta chains form an alternating ring which encloses part of the gamma chain. F(1) is attached to F(0) by a central stalk formed by the gamma and epsilon chains, while a peripheral stalk is formed by the delta and b chains.

The protein localises to the cell membrane. In terms of biological role, f(1)F(0) ATP synthase produces ATP from ADP in the presence of a proton or sodium gradient. F-type ATPases consist of two structural domains, F(1) containing the extramembraneous catalytic core and F(0) containing the membrane proton channel, linked together by a central stalk and a peripheral stalk. During catalysis, ATP synthesis in the catalytic domain of F(1) is coupled via a rotary mechanism of the central stalk subunits to proton translocation. Functionally, this protein is part of the stalk that links CF(0) to CF(1). It either transmits conformational changes from CF(0) to CF(1) or is implicated in proton conduction. This chain is ATP synthase subunit delta, found in Streptococcus equinus (Streptococcus bovis).